The following is a 172-amino-acid chain: uncharacterized protein (172 aa).

Disordered regions lie at residues 1–39 (MAKV…NSNN) and 90–112 (DLNG…GSIN). A compositionally biased stretch (low complexity) spans 98 to 110 (NDSNNDNSPSRGS).

This is an uncharacterized protein from Dictyostelium discoideum (Social amoeba).